Consider the following 248-residue polypeptide: Triosephosphate isomerase (248 aa).

Substrate is bound at residue N9–K11. H94 functions as the Electrophile in the catalytic mechanism. E166 serves as the catalytic Proton acceptor. Residues G172, S212, and G233–G234 each bind substrate.

The protein belongs to the triosephosphate isomerase family. In terms of assembly, homodimer.

It is found in the cytoplasm. The catalysed reaction is D-glyceraldehyde 3-phosphate = dihydroxyacetone phosphate. Its pathway is carbohydrate biosynthesis; gluconeogenesis. The protein operates within carbohydrate degradation; glycolysis; D-glyceraldehyde 3-phosphate from glycerone phosphate: step 1/1. Its function is as follows. Involved in the gluconeogenesis. Catalyzes stereospecifically the conversion of dihydroxyacetone phosphate (DHAP) to D-glyceraldehyde-3-phosphate (G3P). The protein is Triosephosphate isomerase of Thermoanaerobacter sp. (strain X514).